Reading from the N-terminus, the 55-residue chain is Large ribosomal subunit protein bL33 (55 aa).

The protein belongs to the bacterial ribosomal protein bL33 family.

This is Large ribosomal subunit protein bL33 from Gluconacetobacter diazotrophicus (strain ATCC 49037 / DSM 5601 / CCUG 37298 / CIP 103539 / LMG 7603 / PAl5).